Reading from the N-terminus, the 2188-residue chain is Genome polyprotein (2188 aa).

The Cell attachment site motif lies at 772 to 774 (RGD). An LRAT domain is found at 795–889 (LAYLDRGFYK…DIFGTHTLSQ (95 aa)). Residue H805 is the For protein 2A H-NC of the active site. Residue C874 is the For protein 2A H-NC; Acyl-thioester intermediate of the active site. Residues 1165 to 1326 (FQELARIPNR…KAYSKSGKLN (162 aa)) enclose the SF3 helicase domain. An ATP-binding site is contributed by 1193 to 1200 (GEPGQGKS). Y1502 carries the O-(5'-phospho-RNA)-tyrosine modification. In terms of domain architecture, Peptidase C3 spans 1526–1716 (APYDGQLEHI…IPFNFLKNDM (191 aa)). Residues H1566, D1604, and C1678 each act as for protease 3C activity in the active site. Catalysis depends on C1905, which acts as the Acyl-thioester intermediate. One can recognise a RdRp catalytic domain in the interval 1953–2067 (DYNYEMDYSQ…SLDREIEPER (115 aa)). Mg(2+)-binding residues include D1959 and D2053.

It belongs to the picornaviruses polyprotein family. Interacts with capsid protein VP1 and capsid protein VP3 to form heterotrimeric protomers. Five protomers subsequently associate to form pentamers which serve as building blocks for the capsid. As to quaternary structure, interacts with capsid protein VP0, and capsid protein VP3 to form heterotrimeric protomers. Five protomers subsequently associate to form pentamers which serve as building blocks for the capsid. In terms of assembly, interacts with capsid protein VP0 and capsid protein VP1 to form heterotrimeric protomers. Five protomers subsequently associate to form pentamers which serve as building blocks for the capsid. Homohexamer; forms a hexameric ring structure with 6-fold symmetry characteristic of AAA+ ATPases. As to quaternary structure, homodimer. Interacts with host ACBD3. In terms of assembly, interacts with RNA-directed RNA polymerase. Interacts with Viral protein genome-linked. Mg(2+) is required as a cofactor. In terms of processing, VPg is uridylylated by the polymerase and is covalently linked to the 5'-end of genomic RNA. This uridylylated form acts as a nucleotide-peptide primer for the polymerase. Post-translationally, specific enzymatic cleavages yield mature proteins. All cleavages are catalyzed by P3C.

It is found in the virion. Its subcellular location is the host cytoplasm. It localises to the host nucleus. The protein resides in the host nucleolus. The protein localises to the host cytoplasmic vesicle membrane. It catalyses the reaction RNA(n) + a ribonucleoside 5'-triphosphate = RNA(n+1) + diphosphate. The catalysed reaction is a ribonucleoside 5'-triphosphate + H2O = a ribonucleoside 5'-diphosphate + phosphate + H(+). The enzyme catalyses Selective cleavage of Gln-|-Gly bond in the poliovirus polyprotein. In other picornavirus reactions Glu may be substituted for Gln, and Ser or Thr for Gly.. Its function is as follows. Forms an icosahedral capsid of pseudo T=3 symmetry together with capsid proteins VP1 and VP3. The capsid is 300 Angstroms in diameter, composed of 60 copies of each capsid protein and enclosing the viral positive strand RNA genome. Capsid proteins interact with host alpha-V/beta-3 integrin heterodimer to provide virion attachment target cell. This attachment induces virion internalization predominantly through clathrin-mediated endocytosis. Binds packaging signals present in the viral RNA. In terms of biological role, forms an icosahedral capsid of pseudo T=3 symmetry together with capsid proteins VP0 and VP1. The capsid is 300 Angstroms in diameter, composed of 60 copies of each capsid protein and enclosing the viral positive strand RNA genome. Capsid proteins interact with host alpha-V/beta-3 integrin heterodimer to provide virion attachment target cell. This attachment induces virion internalization predominantly through clathrin-mediated endocytosis. Binds packaging signals present in the viral RNA. Forms an icosahedral capsid of pseudo T=3 symmetry together with capsid proteins VP0 and VP3. The capsid is 300 Angstroms in diameter, composed of 60 copies of each capsid protein and enclosing the viral positive strand RNA genome. Capsid proteins interact with host alpha-V/beta-3 integrin heterodimer to provide virion attachment target cell. This attachment induces virion internalization predominantly through clathrin-mediated endocytosis. Binds packaging signals present in the viral RNA. Functionally, is not a protease. Its function is as follows. Plays an essential role in the virus replication cycle by acting as a viroporin. Creates a pore in the host endoplasmic reticulum and as a consequence releases Ca2+ in the cytoplasm of infected cell. In turn, high levels of cytoplasmic calcium may trigger membrane trafficking and transport of viral ER-associated proteins to viroplasms, sites of viral genome replication. In terms of biological role, induces and associates with structural rearrangements of intracellular membranes. Displays RNA-binding, nucleotide binding and NTPase activities. May play a role in virion morphogenesis and viral RNA encapsidation by interacting with the capsid protein VP3. Localizes the viral replication complex to the surface of membranous vesicles. It inhibits host cell endoplasmic reticulum-to-Golgi apparatus transport and causes the disassembly of the Golgi complex, possibly through GBF1 interaction. This would result in depletion of MHC, trail receptors and IFN receptors at the host cell surface. Plays an essential role in viral RNA replication by recruiting ACBD3 and PI4KB at the viral replication sites, thereby allowing the formation of the rearranged membranous structures where viral replication takes place. Functionally, acts as a primer for viral RNA replication and remains covalently bound to viral genomic RNA. VPg is uridylylated prior to priming replication into VPg-pUpU. The VPg-pUpU is then used as primer on the genomic RNA poly(A) by the RNA-dependent RNA polymerase to replicate the viral genome. Following genome release from the infecting virion in the cytoplasm, the VPg-RNA linkage is probably removed by host TDP2. During the late stage of the replication cycle, host TDP2 is excluded from sites of viral RNA synthesis and encapsidation, allowing for the generation of progeny virions. Its function is as follows. Cysteine protease that generates mature viral proteins from the precursor polyprotein. In addition to its proteolytic activity, it binds to viral RNA, and thus influences viral genome replication. RNA and substrate bind cooperatively to the protease. In terms of biological role, replicates the viral genomic RNA on the surface of intracellular membranes. Covalently attaches UMP to a tyrosine of VPg, which is used to prime RNA synthesis. The positive stranded RNA genome is first replicated at virus induced membranous vesicles, creating a dsRNA genomic replication form. This dsRNA is then used as template to synthesize positive stranded RNA genomes. ss(+)RNA genomes are either translated, replicated or encapsidated. In Human parechovirus 5 (strain CT86-6760) (HPeV-5), this protein is Genome polyprotein.